Reading from the N-terminus, the 156-residue chain is ATP synthase subunit b (156 aa).

The helical transmembrane segment at Leu7 to Ile29 threads the bilayer.

The protein belongs to the ATPase B chain family. F-type ATPases have 2 components, F(1) - the catalytic core - and F(0) - the membrane proton channel. F(1) has five subunits: alpha(3), beta(3), gamma(1), delta(1), epsilon(1). F(0) has three main subunits: a(1), b(2) and c(10-14). The alpha and beta chains form an alternating ring which encloses part of the gamma chain. F(1) is attached to F(0) by a central stalk formed by the gamma and epsilon chains, while a peripheral stalk is formed by the delta and b chains.

The protein localises to the cell inner membrane. In terms of biological role, f(1)F(0) ATP synthase produces ATP from ADP in the presence of a proton or sodium gradient. F-type ATPases consist of two structural domains, F(1) containing the extramembraneous catalytic core and F(0) containing the membrane proton channel, linked together by a central stalk and a peripheral stalk. During catalysis, ATP synthesis in the catalytic domain of F(1) is coupled via a rotary mechanism of the central stalk subunits to proton translocation. Component of the F(0) channel, it forms part of the peripheral stalk, linking F(1) to F(0). In Thiobacillus denitrificans (strain ATCC 25259 / T1), this protein is ATP synthase subunit b.